Consider the following 107-residue polypeptide: Probable antitoxin TacA (107 aa).

The protein belongs to the TacA antitoxin family. Forms a complex with cognate antitoxin TacT.

Functionally, probable antitoxin component of a type II toxin-antitoxin (TA) system. Should neutralize cognate toxin TacT (y4aS). The polypeptide is Probable antitoxin TacA (Sinorhizobium fredii (strain NBRC 101917 / NGR234)).